The sequence spans 120 residues: Immunoglobulin kappa variable 2D-26 (120 aa).

Positions 1-20 (MRLPAQLLGLLMLWVPGSSA) are cleaved as a signal peptide. The tract at residues 21-43 (EIVMTQTPLSLSITPGEQASMSC) is framework-1. One can recognise an Ig-like domain in the interval 21-120 (EIVMTQTPLS…YYCMQDAQDP (100 aa)). Cys-43 and Cys-113 are disulfide-bonded. Positions 44–59 (RSSQSLLHSDGYTYLY) are complementarity-determining-1. A framework-2 region spans residues 60 to 74 (WFLQKARPVSTLLIY). The interval 75 to 81 (EVSNRFS) is complementarity-determining-2. The tract at residues 82-113 (GVPDRFSGSGSGTDFTLKISRVEAEDFGVYYC) is framework-3. The complementarity-determining-3 stretch occupies residues 114 to 120 (MQDAQDP).

In terms of assembly, immunoglobulins are composed of two identical heavy chains and two identical light chains; disulfide-linked.

It localises to the secreted. The protein localises to the cell membrane. Its function is as follows. V region of the variable domain of immunoglobulin light chains that participates in the antigen recognition. Immunoglobulins, also known as antibodies, are membrane-bound or secreted glycoproteins produced by B lymphocytes. In the recognition phase of humoral immunity, the membrane-bound immunoglobulins serve as receptors which, upon binding of a specific antigen, trigger the clonal expansion and differentiation of B lymphocytes into immunoglobulins-secreting plasma cells. Secreted immunoglobulins mediate the effector phase of humoral immunity, which results in the elimination of bound antigens. The antigen binding site is formed by the variable domain of one heavy chain, together with that of its associated light chain. Thus, each immunoglobulin has two antigen binding sites with remarkable affinity for a particular antigen. The variable domains are assembled by a process called V-(D)-J rearrangement and can then be subjected to somatic hypermutations which, after exposure to antigen and selection, allow affinity maturation for a particular antigen. The chain is Immunoglobulin kappa variable 2D-26 from Homo sapiens (Human).